The following is a 129-amino-acid chain: MKTVQFCFLFCCWKAICCNSCELTNITIAIENEECHFCISINTTWCAGYCYTRDLVYKDPATPNIQTTCTFKELVYETVRVPGCAHHADSFYTYPVATQCHCGKCDSDSTDCTMQGLGPDYCSFSEMKE.

A signal peptide spans 1–20; the sequence is MKTVQFCFLFCCWKAICCNS. 6 disulfide bridges follow: Cys21/Cys69, Cys35/Cys84, Cys38/Cys122, Cys46/Cys100, Cys50/Cys102, and Cys105/Cys112. N-linked (GlcNAc...) asparagine glycans are attached at residues Asn25 and Asn42.

This sequence belongs to the glycoprotein hormones subunit beta family. Heterodimer. The active follitropin is a heterodimer composed of an alpha chain/CGA shared with other hormones and a unique beta chain/FSHB shown here.

It is found in the secreted. In terms of biological role, together with the alpha chain CGA constitutes follitropin, the follicle-stimulating hormone, and provides its biological specificity to the hormone heterodimer. Binds FSHR, a G protein-coupled receptor, on target cells to activate downstream signaling pathways. Follitropin is involved in follicle development and spermatogenesis in reproductive organs. In Aotus nancymaae (Ma's night monkey), this protein is Follitropin subunit beta (FSHB).